The sequence spans 195 residues: Myosin regulatory light chain, striated muscle, 25 kDa isoform (195 aa).

The segment covering 1 to 17 (AKDKEKKEKKDKKKDDA) has biased composition (basic and acidic residues). A disordered region spans residues 1-39 (AKDKEKKEKKDKKKDDAPAEEAPAAAAAPAEEAAPTPSA). The segment covering 20 to 39 (EEAPAAAAAPAEEAAPTPSA) has biased composition (low complexity). 2 consecutive EF-hand domains span residues 55–90 (NQIQEFKEAFTMIDQDRDGIIGPDDLGNIFQQIGRE) and 124–159 (DTEGTLRDAFALFDEDKLGYLLEEYVKDLLTNVGDQ). Ca(2+)-binding residues include Asp68, Asp70, Asp72, and Asp79.

Myosin is a hexamer of 2 heavy chains and 4 light chains.

Plays an important role in regulation of muscle cell contractile activity. The sequence is that of Myosin regulatory light chain, striated muscle, 25 kDa isoform from Lumbricus terrestris (Common earthworm).